Reading from the N-terminus, the 133-residue chain is U-scoloptoxin(11)-Sm1a (133 aa).

The first 19 residues, 1-19 (MIWFLAFILFLAAGELVSS), serve as a signal peptide directing secretion.

It belongs to the scoloptoxin-11 family. In terms of processing, contains 10 disulfide bonds. In terms of tissue distribution, expressed by the venom gland.

It is found in the secreted. In Scolopendra morsitans (Tanzanian blue ringleg centipede), this protein is U-scoloptoxin(11)-Sm1a.